The primary structure comprises 295 residues: Ribosomal protein L11 methyltransferase (295 aa).

4 residues coordinate S-adenosyl-L-methionine: threonine 150, glycine 171, aspartate 193, and asparagine 232.

It belongs to the methyltransferase superfamily. PrmA family.

Its subcellular location is the cytoplasm. The catalysed reaction is L-lysyl-[protein] + 3 S-adenosyl-L-methionine = N(6),N(6),N(6)-trimethyl-L-lysyl-[protein] + 3 S-adenosyl-L-homocysteine + 3 H(+). In terms of biological role, methylates ribosomal protein L11. This Neisseria meningitidis serogroup A / serotype 4A (strain DSM 15465 / Z2491) protein is Ribosomal protein L11 methyltransferase.